The following is a 217-amino-acid chain: Protein 33K (217 aa).

Positions 1–142 (MPPKGNKQAI…KEKTSAIATR (142 aa)) are disordered. Acidic residues predominate over residues 24–68 (QWDEEEESWDDSQAEEVSDEEEMESWESLDEELEDKPPKDEEEEI). Over residues 69–78 (IASAAAPSSK) the composition is skewed to low complexity. Residues 123 to 136 (KRSEKTTRPRKEKT) are compositionally biased toward basic and acidic residues. Residues 160–187 (YAIFQQSRGQQLELKVKNRSLRSLTRSC) form a necessary for nuclear subcellular location region. The interval 166–186 (SRGQQLELKVKNRSLRSLTRS) is RS-repeat; required for splicing enhancer activity.

This sequence belongs to the adenoviridae splicing factor family. In terms of assembly, homooligomer. Interacts with DBP; this interaction occurs at a unique vertex during genome packaging. Interacts with IVa2; this interaction occurs at a unique vertex during genome packaging and seems to potentiate IVa2 and 33K oligomerization. Post-translationally, phosphorylated in vitro by human PKA and PRKDC. PRKDC inhibits, whereas PKA activates the splicing factor.

It is found in the host nucleus. In terms of biological role, promotes alternative splicing of late transcripts by promoting splicing at weak 3' splice sites. Required for the temporal activation of major late pre-mRNA splicing at late times of infection. Induces the splicing and expression of the late capsid vertex protein. Probably functions as the small terminase that is part of the molecular motor that translocates genomic DNA in empty capsid during DNA packaging. This motor is located at a unique vertex and comprises at least the IVa2 ATPase, the small terminase 33K and probably a portal. Forms a ring-like structure of about 17 nm in which genomic DNA is translocated into the capsid. Stimulates IVa2 ATPase activity in the presence of the viral genome. Once the DNA is packaged, the terminase detaches: the 33K protein is present in the empty particles, but not in the mature virions. Also involved in virion assembly. The sequence is that of Protein 33K from Human adenovirus F serotype 41 (HAdV-41).